The chain runs to 133 residues: Small ribosomal subunit protein uS8 (133 aa).

The protein belongs to the universal ribosomal protein uS8 family. In terms of assembly, part of the 30S ribosomal subunit. Contacts proteins S5 and S12.

One of the primary rRNA binding proteins, it binds directly to 16S rRNA central domain where it helps coordinate assembly of the platform of the 30S subunit. The protein is Small ribosomal subunit protein uS8 of Protochlamydia amoebophila (strain UWE25).